We begin with the raw amino-acid sequence, 283 residues long: MITGKTLITGVIGHPIEHSFSPPMHNNAYKLMNMDYKYVPFHVEVENLKHVITSAKTLNIKGLNVTIPHKTTIIPYLDEIDETAEKIGAVNTINFKDGIAKGYNTDGIGAIVSIEKYTSLKDKNIMIIGAGGASKAITFTLLNKNINQLIVANRSKDNAQKLITNLKNQTNFENIDFINIKKTDNVIDDVDIIINTTPIGMYPKDEVAPPIKTDKISSKHTVMDIIYNPLETQLLKQSKKQGATTIPGTHMLINQGIKAFEIFTGKTPSYESFEKPLLKHLQG.

Shikimate contacts are provided by residues 19–21 (SFS) and Thr-66. Catalysis depends on Lys-70, which acts as the Proton acceptor. Glu-82 contributes to the NADP(+) binding site. Residues Asn-91 and Asp-106 each contribute to the shikimate site. Residues 129–133 (GAGGA) and Ile-225 each bind NADP(+). Residue Tyr-227 participates in shikimate binding. Residue Gly-248 coordinates NADP(+).

It belongs to the shikimate dehydrogenase family. As to quaternary structure, homodimer.

It catalyses the reaction shikimate + NADP(+) = 3-dehydroshikimate + NADPH + H(+). It functions in the pathway metabolic intermediate biosynthesis; chorismate biosynthesis; chorismate from D-erythrose 4-phosphate and phosphoenolpyruvate: step 4/7. Its function is as follows. Involved in the biosynthesis of the chorismate, which leads to the biosynthesis of aromatic amino acids. Catalyzes the reversible NADPH linked reduction of 3-dehydroshikimate (DHSA) to yield shikimate (SA). The polypeptide is Shikimate dehydrogenase (NADP(+)) (Methanosphaera stadtmanae (strain ATCC 43021 / DSM 3091 / JCM 11832 / MCB-3)).